We begin with the raw amino-acid sequence, 158 residues long: Transcriptional repressor NrdR (158 aa).

A zinc finger lies at 3-34 (CPYCGFEESKVVDSRSTEDHKAIRRRRECLKC). The ATP-cone domain occupies 49 to 139 (VLVIKRDSNR…VYRQFKDINT (91 aa)).

This sequence belongs to the NrdR family. Requires Zn(2+) as cofactor.

Functionally, negatively regulates transcription of bacterial ribonucleotide reductase nrd genes and operons by binding to NrdR-boxes. In Clostridium novyi (strain NT), this protein is Transcriptional repressor NrdR.